A 131-amino-acid polypeptide reads, in one-letter code: Dihydroneopterin aldolase 2 (131 aa).

Substrate-binding positions include Glu29, Tyr61, and Leu80 to Glu81. Lys107 acts as the Proton donor/acceptor in catalysis.

Belongs to the DHNA family. In terms of assembly, homooctamer. Forms a hollow cylinder assembled from two ring-shaped tetramers. Expressed in roots, leaves, stems and siliques.

It catalyses the reaction 7,8-dihydroneopterin = 6-hydroxymethyl-7,8-dihydropterin + glycolaldehyde. It participates in cofactor biosynthesis; tetrahydrofolate biosynthesis; 2-amino-4-hydroxy-6-hydroxymethyl-7,8-dihydropteridine diphosphate from 7,8-dihydroneopterin triphosphate: step 3/4. Functionally, catalyzes the conversion of 7,8-dihydroneopterin into 6-hydroxymethyl-7,8-dihydropterin, a biosynthetic precursor of the vitamin tetrahydrofolate. Can use L-threo-dihydroneopterin and D-erythro-dihydroneopterin as substrates for the formation of 6-hydroxymethyldihydropterin, but it can also catalyze the epimerization of carbon 2' of dihydroneopterin and dihydromonapterin. This Arabidopsis thaliana (Mouse-ear cress) protein is Dihydroneopterin aldolase 2.